Reading from the N-terminus, the 1034-residue chain is Presequence protease, mitochondrial (1034 aa).

A mitochondrion-targeting transit peptide spans Met-1–Ser-29. His-128 is a binding site for Zn(2+). The Proton acceptor role is filled by Glu-131. 2 residues coordinate Zn(2+): His-132 and Glu-229.

It belongs to the peptidase M16 family. PreP subfamily. As to quaternary structure, homodimer. Requires Zn(2+) as cofactor.

The protein localises to the mitochondrion. Its function is as follows. ATP-independent protease that degrades mitochondrial transit peptides after their cleavage. Also degrades other unstructured peptides. This is Presequence protease, mitochondrial from Drosophila melanogaster (Fruit fly).